We begin with the raw amino-acid sequence, 1385 residues long: DNA-directed RNA polymerase subunit beta' (1385 aa).

Residues Cys-75, Cys-77, Cys-90, and Cys-93 each coordinate Zn(2+). 3 residues coordinate Mg(2+): Asp-466, Asp-468, and Asp-470. Residues Cys-809, Cys-883, Cys-890, and Cys-893 each contribute to the Zn(2+) site.

Belongs to the RNA polymerase beta' chain family. As to quaternary structure, the RNAP catalytic core consists of 2 alpha, 1 beta, 1 beta' and 1 omega subunit. When a sigma factor is associated with the core the holoenzyme is formed, which can initiate transcription. The cofactor is Mg(2+). Zn(2+) is required as a cofactor.

The enzyme catalyses RNA(n) + a ribonucleoside 5'-triphosphate = RNA(n+1) + diphosphate. In terms of biological role, DNA-dependent RNA polymerase catalyzes the transcription of DNA into RNA using the four ribonucleoside triphosphates as substrates. The polypeptide is DNA-directed RNA polymerase subunit beta' (Nitratidesulfovibrio vulgaris (strain ATCC 29579 / DSM 644 / CCUG 34227 / NCIMB 8303 / VKM B-1760 / Hildenborough) (Desulfovibrio vulgaris)).